Consider the following 165-residue polypeptide: Large ribosomal subunit protein uL10 (165 aa).

It belongs to the universal ribosomal protein uL10 family. Part of the ribosomal stalk of the 50S ribosomal subunit. The N-terminus interacts with L11 and the large rRNA to form the base of the stalk. The C-terminus forms an elongated spine to which L12 dimers bind in a sequential fashion forming a multimeric L10(L12)X complex.

Its function is as follows. Forms part of the ribosomal stalk, playing a central role in the interaction of the ribosome with GTP-bound translation factors. This chain is Large ribosomal subunit protein uL10, found in Burkholderia lata (strain ATCC 17760 / DSM 23089 / LMG 22485 / NCIMB 9086 / R18194 / 383).